We begin with the raw amino-acid sequence, 332 residues long: Arabinogalactan endo-beta-1,4-galactanase (332 aa).

The N-linked (GlcNAc...) asparagine glycan is linked to Asn111. The active-site Proton donor is Glu135. The active-site Nucleophile is Glu245.

The protein belongs to the glycosyl hydrolase 53 family.

It carries out the reaction The enzyme specifically hydrolyzes (1-&gt;4)-beta-D-galactosidic linkages in type I arabinogalactans.. The protein is Arabinogalactan endo-beta-1,4-galactanase of Thermothelomyces thermophilus (Myceliophthora thermophila).